We begin with the raw amino-acid sequence, 101 residues long: Small ribosomal subunit protein bS18c (101 aa).

The segment covering 1 to 19 has biased composition (basic residues); it reads MDKSKQPFHKTKRSFRRRL. The interval 1 to 23 is disordered; it reads MDKSKQPFHKTKRSFRRRLPPIG.

It belongs to the bacterial ribosomal protein bS18 family. In terms of assembly, part of the 30S ribosomal subunit.

It localises to the plastid. The protein localises to the chloroplast. The sequence is that of Small ribosomal subunit protein bS18c from Lemna minor (Common duckweed).